The sequence spans 493 residues: Glutamate--tRNA ligase (493 aa).

The 'HIGH' region motif lies at proline 10–threonine 20. A 'KMSKS' region motif is present at residues lysine 251–arginine 255. Lysine 254 contacts ATP.

The protein belongs to the class-I aminoacyl-tRNA synthetase family. Glutamate--tRNA ligase type 1 subfamily. As to quaternary structure, monomer.

The protein resides in the cytoplasm. The catalysed reaction is tRNA(Glu) + L-glutamate + ATP = L-glutamyl-tRNA(Glu) + AMP + diphosphate. In terms of biological role, catalyzes the attachment of glutamate to tRNA(Glu) in a two-step reaction: glutamate is first activated by ATP to form Glu-AMP and then transferred to the acceptor end of tRNA(Glu). This chain is Glutamate--tRNA ligase, found in Pseudomonas putida (strain W619).